Here is a 156-residue protein sequence, read N- to C-terminus: Ribosome maturation factor RimP (156 aa).

Belongs to the RimP family.

Its subcellular location is the cytoplasm. Functionally, required for maturation of 30S ribosomal subunits. This Synechococcus sp. (strain JA-2-3B'a(2-13)) (Cyanobacteria bacterium Yellowstone B-Prime) protein is Ribosome maturation factor RimP.